Reading from the N-terminus, the 369-residue chain is Methylthioribose-1-phosphate isomerase (369 aa).

Residues 54–56 (RGA), arginine 95, and glutamine 208 each bind substrate. The active-site Proton donor is the aspartate 249. 259 to 260 (NK) serves as a coordination point for substrate.

The protein belongs to the eIF-2B alpha/beta/delta subunits family. MtnA subfamily.

It catalyses the reaction 5-(methylsulfanyl)-alpha-D-ribose 1-phosphate = 5-(methylsulfanyl)-D-ribulose 1-phosphate. The protein operates within amino-acid biosynthesis; L-methionine biosynthesis via salvage pathway; L-methionine from S-methyl-5-thio-alpha-D-ribose 1-phosphate: step 1/6. Catalyzes the interconversion of methylthioribose-1-phosphate (MTR-1-P) into methylthioribulose-1-phosphate (MTRu-1-P). In Desulfatibacillum aliphaticivorans, this protein is Methylthioribose-1-phosphate isomerase.